The chain runs to 329 residues: ADP-L-glycero-D-manno-heptose-6-epimerase (329 aa).

Residues 10-11, 31-32, Lys-38, Lys-53, 74-78, and Asn-91 each bind NADP(+); these read FI, DD, and QGACS. Tyr-138 (proton acceptor) is an active-site residue. Lys-142 provides a ligand contact to NADP(+). Substrate is bound at residue Asn-167. The NADP(+) site is built by Val-168 and Lys-176. The active-site Proton acceptor is Lys-176. Residues Arg-178, His-185, 199-202, Arg-212, and Tyr-291 contribute to the substrate site; that span reads FAGW.

Belongs to the NAD(P)-dependent epimerase/dehydratase family. HldD subfamily. In terms of assembly, homopentamer. The cofactor is NADP(+).

It catalyses the reaction ADP-D-glycero-beta-D-manno-heptose = ADP-L-glycero-beta-D-manno-heptose. It functions in the pathway nucleotide-sugar biosynthesis; ADP-L-glycero-beta-D-manno-heptose biosynthesis; ADP-L-glycero-beta-D-manno-heptose from D-glycero-beta-D-manno-heptose 7-phosphate: step 4/4. Its pathway is bacterial outer membrane biogenesis; LPS core biosynthesis. Catalyzes the interconversion between ADP-D-glycero-beta-D-manno-heptose and ADP-L-glycero-beta-D-manno-heptose via an epimerization at carbon 6 of the heptose. The sequence is that of ADP-L-glycero-D-manno-heptose-6-epimerase from Bordetella pertussis (strain Tohama I / ATCC BAA-589 / NCTC 13251).